We begin with the raw amino-acid sequence, 400 residues long: Enoyl-[acyl-carrier-protein] reductase [NADH] 2 (400 aa).

NAD(+) is bound by residues 48 to 53, 75 to 76, 112 to 113, and 141 to 142; these read GASSGF, FE, DA, and LA. Y227 lines the substrate pocket. The active-site Proton donor is the Y237. NAD(+)-binding positions include K246 and 275-277; that span reads LVT.

The protein belongs to the TER reductase family. In terms of assembly, monomer.

The catalysed reaction is a 2,3-saturated acyl-[ACP] + NAD(+) = a (2E)-enoyl-[ACP] + NADH + H(+). It functions in the pathway lipid metabolism; fatty acid biosynthesis. Functionally, involved in the final reduction of the elongation cycle of fatty acid synthesis (FAS II). Catalyzes the reduction of a carbon-carbon double bond in an enoyl moiety that is covalently linked to an acyl carrier protein (ACP). The protein is Enoyl-[acyl-carrier-protein] reductase [NADH] 2 of Photobacterium profundum (strain SS9).